Consider the following 204-residue polypeptide: Urease accessory protein UreG (204 aa).

11-18 (GPVGAGKT) contacts GTP.

The protein belongs to the SIMIBI class G3E GTPase family. UreG subfamily. Homodimer. UreD, UreF and UreG form a complex that acts as a GTP-hydrolysis-dependent molecular chaperone, activating the urease apoprotein by helping to assemble the nickel containing metallocenter of UreC. The UreE protein probably delivers the nickel.

The protein localises to the cytoplasm. Facilitates the functional incorporation of the urease nickel metallocenter. This process requires GTP hydrolysis, probably effectuated by UreG. The protein is Urease accessory protein UreG of Staphylococcus epidermidis (strain ATCC 12228 / FDA PCI 1200).